Here is a 258-residue protein sequence, read N- to C-terminus: Trypsin eta (258 aa).

A signal peptide spans 1–22 (MNKVILRILALLFLLGIGAVSA). Residues 23-27 (QPDGR) constitute a propeptide, activation peptide. The region spanning 28 to 258 (IVGGADTTNY…YFKDWIASRV (231 aa)) is the Peptidase S1 domain. An intrachain disulfide couples C59 to C75. Active-site charge relay system residues include H74 and D120. Intrachain disulfides connect C185/C200 and C211/C235. The active-site Charge relay system is the S215.

It belongs to the peptidase S1 family.

It localises to the secreted. Its subcellular location is the extracellular space. It carries out the reaction Preferential cleavage: Arg-|-Xaa, Lys-|-Xaa.. The polypeptide is Trypsin eta (etaTry) (Drosophila erecta (Fruit fly)).